Here is a 230-residue protein sequence, read N- to C-terminus: Ureidoacrylate amidohydrolase RutB (230 aa).

The active-site Proton acceptor is Asp-23. The active site involves Lys-132. Cys-165 serves as the catalytic Nucleophile.

It belongs to the isochorismatase family. RutB subfamily.

It catalyses the reaction (Z)-3-ureidoacrylate + H2O + H(+) = (Z)-3-aminoacrylate + NH4(+) + CO2. It carries out the reaction (Z)-3-ureidoacrylate + H2O = (Z)-3-aminoacrylate + carbamate + H(+). The catalysed reaction is (Z)-2-methylureidoacrylate + H2O + H(+) = (Z)-2-methylaminoacrylate + NH4(+) + CO2. Functionally, hydrolyzes ureidoacrylate to form aminoacrylate and carbamate. The carbamate hydrolyzes spontaneously, thereby releasing one of the nitrogen atoms of the pyrimidine ring as ammonia and one of its carbon atoms as CO2. In Yersinia enterocolitica serotype O:8 / biotype 1B (strain NCTC 13174 / 8081), this protein is Ureidoacrylate amidohydrolase RutB.